The sequence spans 287 residues: D-alanine--D-alanine ligase (287 aa).

One can recognise an ATP-grasp domain in the interval Lys-98 to Glu-283. Residue Pro-124–Thr-169 coordinates ATP. Mg(2+) contacts are provided by Asp-238, Glu-250, and Asn-252.

Belongs to the D-alanine--D-alanine ligase family. It depends on Mg(2+) as a cofactor. Requires Mn(2+) as cofactor.

Its subcellular location is the cytoplasm. The catalysed reaction is 2 D-alanine + ATP = D-alanyl-D-alanine + ADP + phosphate + H(+). It functions in the pathway cell wall biogenesis; peptidoglycan biosynthesis. Cell wall formation. This Fusobacterium nucleatum subsp. nucleatum (strain ATCC 25586 / DSM 15643 / BCRC 10681 / CIP 101130 / JCM 8532 / KCTC 2640 / LMG 13131 / VPI 4355) protein is D-alanine--D-alanine ligase.